The sequence spans 62 residues: Translational regulator CsrA (62 aa).

It belongs to the CsrA/RsmA family. Homodimer; the beta-strands of each monomer intercalate to form a hydrophobic core, while the alpha-helices form wings that extend away from the core.

It is found in the cytoplasm. In terms of biological role, a key translational regulator that binds mRNA to regulate translation initiation and/or mRNA stability. Mediates global changes in gene expression, shifting from rapid growth to stress survival by linking envelope stress, the stringent response and the catabolite repression systems. Usually binds in the 5'-UTR; binding at or near the Shine-Dalgarno sequence prevents ribosome-binding, repressing translation, binding elsewhere in the 5'-UTR can activate translation and/or stabilize the mRNA. Its function is antagonized by small RNA(s). In Haemophilus ducreyi (strain 35000HP / ATCC 700724), this protein is Translational regulator CsrA.